We begin with the raw amino-acid sequence, 340 residues long: Guanine nucleotide-binding protein subunit beta-1 (340 aa).

WD repeat units lie at residues 53–83 (GHLA…IVWD), 95–125 (LRSS…SIYS), 141–170 (GHTG…ALWD), 182–212 (GHTG…KLWD), 224–254 (GHES…RLFD), 268–298 (NIIC…NVWD), and 310–340 (GHDN…KIWN).

It belongs to the WD repeat G protein beta family. G proteins are composed of 3 units, alpha, beta and gamma. Interacts with G protein gamma subunits gpc-1 and gpc-2 and with egl-10 and eat-16. Interacts with goa-1 (in GDP-bound form).

Its function is as follows. Guanine nucleotide-binding proteins (G proteins) are involved as a modulator or transducer in various transmembrane signaling systems. The beta and gamma chains are required for the GTPase activity, for replacement of GDP by GTP, and for G protein-effector interaction. In the early embryo, controls the magnitude of the forces acting on centrosomes but is not required for generating asymmetric forces. This chain is Guanine nucleotide-binding protein subunit beta-1 (gpb-1), found in Caenorhabditis briggsae.